Here is a 1135-residue protein sequence, read N- to C-terminus: WASH complex subunit 4 (1135 aa).

The residue at position 2 (alanine 2) is an N-acetylalanine.

It belongs to the SWIP family. In terms of assembly, probable component of the WASH complex.

The polypeptide is WASH complex subunit 4 (Dictyostelium discoideum (Social amoeba)).